Here is a 292-residue protein sequence, read N- to C-terminus: Glycine-rich RNA-binding protein RZ1B (292 aa).

Positions Ser12–Pro90 constitute an RRM domain. Residue Ser20 is modified to Phosphoserine. The interval Gly93–Glu114 is disordered. A CCHC-type zinc finger spans residues Cys117–Ser132. 2 stretches are compositionally biased toward basic and acidic residues: residues Asp180–Phe210 and Phe220–Pro268. Residues Asp180–Trp292 are disordered.

As to expression, expressed in roots, rosette and cauline leaves, stems, floral buds and flowers.

The protein localises to the nucleus. In terms of biological role, binds RNA and DNA sequences non-specifically. May be involved in tolerance to cold stress. In Arabidopsis thaliana (Mouse-ear cress), this protein is Glycine-rich RNA-binding protein RZ1B.